Here is a 1128-residue protein sequence, read N- to C-terminus: Translation initiation factor IF-2 (1128 aa).

A disordered region spans residues 57–519; sequence NSDKQILSIN…KETTRQRQKR (463 aa). Residues 70–83 are compositionally biased toward basic and acidic residues; it reads NKKDNYKQNKEDKS. The span at 100-110 shows a compositional bias: low complexity; it reads KKQLLNKPLNK. A compositionally biased stretch (polar residues) spans 120–146; that stretch reads QLKNPNKPNIYNSSQSQANLTNQNTKS. Basic and acidic residues predominate over residues 147-158; that stretch reads KPSEHFNKDKKT. The segment covering 182 to 196 has biased composition (low complexity); the sequence is KNINNNLKSNESSKN. Over residues 201-214 the composition is skewed to basic and acidic residues; sequence GDKRELSLKPDQNR. Composition is skewed to polar residues over residues 243 to 267 and 386 to 397; these read KQNNKQNITFKQTVSNRPGTPNRPG and AKTNNQKQNIES. Over residues 432 to 445 the composition is skewed to basic and acidic residues; that stretch reads RKDWDDSAKLEALR. A compositionally biased stretch (basic residues) spans 499 to 519; sequence HKSTKQFKKKKKETTRQRQKR. In terms of domain architecture, tr-type G spans 620–792; it reads KRPPVITVMG…ILLVSEVEDL (173 aa). The G1 stretch occupies residues 629-636; the sequence is GHVDHGKT. 629-636 serves as a coordination point for GTP; the sequence is GHVDHGKT. Residues 654-658 form a G2 region; sequence GITQH. The interval 679–682 is G3; sequence DTPG. GTP is bound by residues 679–683 and 733–736; these read DTPGH and NKID. Residues 733-736 form a G4 region; it reads NKID. Residues 769–771 form a G5 region; that stretch reads SAI.

The protein belongs to the TRAFAC class translation factor GTPase superfamily. Classic translation factor GTPase family. IF-2 subfamily.

The protein resides in the cytoplasm. Its function is as follows. One of the essential components for the initiation of protein synthesis. Protects formylmethionyl-tRNA from spontaneous hydrolysis and promotes its binding to the 30S ribosomal subunits. Also involved in the hydrolysis of GTP during the formation of the 70S ribosomal complex. This is Translation initiation factor IF-2 from Prochlorococcus marinus (strain MIT 9312).